Consider the following 177-residue polypeptide: Large ribosomal subunit protein uL30 (177 aa).

Belongs to the universal ribosomal protein uL30 family. In terms of assembly, part of the 50S ribosomal subunit.

The protein is Large ribosomal subunit protein uL30 of Pyrobaculum islandicum (strain DSM 4184 / JCM 9189 / GEO3).